A 720-amino-acid chain; its full sequence is Aminopeptidase RNPEPL1 (720 aa).

321–325 is a substrate binding site; it reads VAMEN. Zn(2+) is bound at residue His-348. Residue Glu-349 is the Proton acceptor of the active site. Zn(2+) is bound by residues His-352 and Glu-371. The interval 671–708 is disordered; that stretch reads GLGPSAEPSTEPSTDLGGAEADTNPDSPALLLGDEAPS.

Belongs to the peptidase M1 family. Zn(2+) is required as a cofactor.

The enzyme catalyses Release of N-terminal amino acids, preferentially methionine, from peptides and arylamides.. Its function is as follows. Broad specificity aminopeptidase which preferentially hydrolyzes an N-terminal methionine, citrulline or glutamine. This is Aminopeptidase RNPEPL1 from Mus musculus (Mouse).